Here is a 336-residue protein sequence, read N- to C-terminus: Glucokinase (336 aa).

12 to 17 lines the ATP pocket; that stretch reads ADIGGT.

It belongs to the bacterial glucokinase family.

The protein resides in the cytoplasm. It carries out the reaction D-glucose + ATP = D-glucose 6-phosphate + ADP + H(+). The sequence is that of Glucokinase from Helicobacter pylori (strain P12).